We begin with the raw amino-acid sequence, 1180 residues long: Tudor domain-containing protein 1 (1180 aa).

2 disordered regions span residues 1 to 66 (MSVK…KKNN) and 79 to 138 (SQED…RPAK). Positions 27–41 (NFEKNENKLPPHESL) are enriched in basic and acidic residues. 2 stretches are compositionally biased toward polar residues: residues 79-91 (SQED…NPNG) and 110-122 (NSVS…SNSP). Cys170, Cys173, Cys181, Cys184, Cys190, Cys194, His202, and Cys206 together coordinate Zn(2+). An MYND-type zinc finger spans residues 170 to 206 (CHRCGLFGSLRCSQCKQTYYCSTACQRRDWSAHSIVC). A Tudor 1 domain is found at 312–372 (IPVKGEVCIA…YHLNRNIDLF (61 aa)). Residues 450–469 (SGQDSKKENADQSDPEDVGK) form a disordered region. Tudor domains are found at residues 541 to 600 (YPAI…LLEL), 762 to 821 (KAEI…FLNL), and 990 to 1048 (RPRI…HLAL).

Belongs to the TDRD1 family. In terms of assembly, found in a mRNP complex, at least composed of TDRD1, TDRD6, TDRD7 and DDX4. Interacts with MAEL. Interacts with PIWIL1, PIWIL2 and PIWIL4 (when methylated on arginine residues). Interacts with TDRD12. As to expression, testis and ovary specific. Also expressed in several cancers.

It localises to the cytoplasm. Functionally, plays a central role during spermatogenesis by participating in the repression transposable elements and preventing their mobilization, which is essential for the germline integrity. Acts via the piRNA metabolic process, which mediates the repression of transposable elements during meiosis by forming complexes composed of piRNAs and Piwi proteins and governs the methylation and subsequent repression of transposons. Required for the localization of Piwi proteins to the meiotic nuage. Involved in the piRNA metabolic process by ensuring the entry of correct transcripts into the normal piRNA pool and limiting the entry of cellular transcripts into the piRNA pathway. May act by allowing the recruitment of piRNA biogenesis or loading factors that ensure the correct entry of transcripts and piRNAs into Piwi proteins. This Homo sapiens (Human) protein is Tudor domain-containing protein 1 (TDRD1).